A 250-amino-acid polypeptide reads, in one-letter code: 5'-nucleotidase SurE (250 aa).

A divalent metal cation-binding residues include aspartate 8, aspartate 9, serine 40, and asparagine 95.

Belongs to the SurE nucleotidase family. Requires a divalent metal cation as cofactor.

Its subcellular location is the cytoplasm. The enzyme catalyses a ribonucleoside 5'-phosphate + H2O = a ribonucleoside + phosphate. Its function is as follows. Nucleotidase that shows phosphatase activity on nucleoside 5'-monophosphates. The sequence is that of 5'-nucleotidase SurE from Nitratidesulfovibrio vulgaris (strain ATCC 29579 / DSM 644 / CCUG 34227 / NCIMB 8303 / VKM B-1760 / Hildenborough) (Desulfovibrio vulgaris).